Here is a 139-residue protein sequence, read N- to C-terminus: Small ribosomal subunit protein uS12 (139 aa).

The interval 1–55 is disordered; that stretch reads MPTINQLIRKGRKAKVKKSDSPALNKGYNSFKKVQTDLSSPQKRGVCTRVGTMTP. The segment covering 32 to 42 has biased composition (polar residues); it reads KKVQTDLSSPQ.

Belongs to the universal ribosomal protein uS12 family. As to quaternary structure, part of the 30S ribosomal subunit. Contacts proteins S8 and S17. May interact with IF1 in the 30S initiation complex.

In terms of biological role, with S4 and S5 plays an important role in translational accuracy. Interacts with and stabilizes bases of the 16S rRNA that are involved in tRNA selection in the A site and with the mRNA backbone. Located at the interface of the 30S and 50S subunits, it traverses the body of the 30S subunit contacting proteins on the other side and probably holding the rRNA structure together. The combined cluster of proteins S8, S12 and S17 appears to hold together the shoulder and platform of the 30S subunit. This chain is Small ribosomal subunit protein uS12, found in Halalkalibacterium halodurans (strain ATCC BAA-125 / DSM 18197 / FERM 7344 / JCM 9153 / C-125) (Bacillus halodurans).